Consider the following 316-residue polypeptide: Ribosomal RNA large subunit methyltransferase F (316 aa).

Residues 200–222 are disordered; that stretch reads EEANKSTSRKVSNLNPKEKKNTN. The span at 204–214 shows a compositional bias: polar residues; it reads KSTSRKVSNLN.

It belongs to the methyltransferase superfamily. METTL16/RlmF family.

It localises to the cytoplasm. The enzyme catalyses adenosine(1618) in 23S rRNA + S-adenosyl-L-methionine = N(6)-methyladenosine(1618) in 23S rRNA + S-adenosyl-L-homocysteine + H(+). Its function is as follows. Specifically methylates the adenine in position 1618 of 23S rRNA. This Flavobacterium johnsoniae (strain ATCC 17061 / DSM 2064 / JCM 8514 / BCRC 14874 / CCUG 350202 / NBRC 14942 / NCIMB 11054 / UW101) (Cytophaga johnsonae) protein is Ribosomal RNA large subunit methyltransferase F.